Here is a 362-residue protein sequence, read N- to C-terminus: Probable dual-specificity RNA methyltransferase RlmN (362 aa).

Glu105 (proton acceptor) is an active-site residue. Residues 111–344 (HEYGNSICVT…VTIRREQGHD (234 aa)) form the Radical SAM core domain. A disulfide bridge links Cys118 with Cys349. Residues Cys125, Cys129, and Cys132 each coordinate [4Fe-4S] cluster. S-adenosyl-L-methionine is bound by residues 175–176 (GE), Ser207, 230–232 (SLH), and Asn306. Cys349 serves as the catalytic S-methylcysteine intermediate.

This sequence belongs to the radical SAM superfamily. RlmN family. The cofactor is [4Fe-4S] cluster.

It localises to the cytoplasm. It carries out the reaction adenosine(2503) in 23S rRNA + 2 reduced [2Fe-2S]-[ferredoxin] + 2 S-adenosyl-L-methionine = 2-methyladenosine(2503) in 23S rRNA + 5'-deoxyadenosine + L-methionine + 2 oxidized [2Fe-2S]-[ferredoxin] + S-adenosyl-L-homocysteine. The catalysed reaction is adenosine(37) in tRNA + 2 reduced [2Fe-2S]-[ferredoxin] + 2 S-adenosyl-L-methionine = 2-methyladenosine(37) in tRNA + 5'-deoxyadenosine + L-methionine + 2 oxidized [2Fe-2S]-[ferredoxin] + S-adenosyl-L-homocysteine. In terms of biological role, specifically methylates position 2 of adenine 2503 in 23S rRNA and position 2 of adenine 37 in tRNAs. This Bacillus cytotoxicus (strain DSM 22905 / CIP 110041 / 391-98 / NVH 391-98) protein is Probable dual-specificity RNA methyltransferase RlmN.